Reading from the N-terminus, the 235-residue chain is Protein GrpE (235 aa).

Polar residues predominate over residues 1–18 (MTDGNQKPDGNSGEQVTV). Disordered stretches follow at residues 1–50 (MTDG…DAAH) and 198–235 (ESVDDGTAVADTAENDQADQGNSADTSGEQAESEPSGS). Residues 19–35 (TDKRRIDPETGEVRHVP) are compositionally biased toward basic and acidic residues. Residues 215–235 (ADQGNSADTSGEQAESEPSGS) are compositionally biased toward polar residues.

This sequence belongs to the GrpE family. As to quaternary structure, homodimer.

Its subcellular location is the cytoplasm. Functionally, participates actively in the response to hyperosmotic and heat shock by preventing the aggregation of stress-denatured proteins, in association with DnaK and GrpE. It is the nucleotide exchange factor for DnaK and may function as a thermosensor. Unfolded proteins bind initially to DnaJ; upon interaction with the DnaJ-bound protein, DnaK hydrolyzes its bound ATP, resulting in the formation of a stable complex. GrpE releases ADP from DnaK; ATP binding to DnaK triggers the release of the substrate protein, thus completing the reaction cycle. Several rounds of ATP-dependent interactions between DnaJ, DnaK and GrpE are required for fully efficient folding. This is Protein GrpE from Mycobacterium tuberculosis (strain ATCC 25177 / H37Ra).